Consider the following 232-residue polypeptide: Ribose-5-phosphate isomerase A (232 aa).

Substrate contacts are provided by residues 29–32 (SGST), 86–89 (DGAD), and 99–102 (KGGG). Glu108 (proton acceptor) is an active-site residue. Lys126 serves as a coordination point for substrate.

Belongs to the ribose 5-phosphate isomerase family. Homodimer.

The enzyme catalyses aldehydo-D-ribose 5-phosphate = D-ribulose 5-phosphate. It functions in the pathway carbohydrate degradation; pentose phosphate pathway; D-ribose 5-phosphate from D-ribulose 5-phosphate (non-oxidative stage): step 1/1. Functionally, catalyzes the reversible conversion of ribose-5-phosphate to ribulose 5-phosphate. The polypeptide is Ribose-5-phosphate isomerase A (Synechococcus sp. (strain ATCC 27144 / PCC 6301 / SAUG 1402/1) (Anacystis nidulans)).